A 367-amino-acid chain; its full sequence is Phosphoribosylaminoimidazole-succinocarboxamide synthase (367 aa).

This sequence belongs to the SAICAR synthetase family.

It carries out the reaction 5-amino-1-(5-phospho-D-ribosyl)imidazole-4-carboxylate + L-aspartate + ATP = (2S)-2-[5-amino-1-(5-phospho-beta-D-ribosyl)imidazole-4-carboxamido]succinate + ADP + phosphate + 2 H(+). Its pathway is purine metabolism; IMP biosynthesis via de novo pathway; 5-amino-1-(5-phospho-D-ribosyl)imidazole-4-carboxamide from 5-amino-1-(5-phospho-D-ribosyl)imidazole-4-carboxylate: step 1/2. The protein is Phosphoribosylaminoimidazole-succinocarboxamide synthase of Shewanella baltica (strain OS223).